Consider the following 647-residue polypeptide: Leishmanolysin-like peptidase (647 aa).

His264 serves as a coordination point for Zn(2+). Glu265 is a catalytic residue. Zn(2+)-binding residues include His268 and His370.

Belongs to the peptidase M8 family. The cofactor is Zn(2+). Expressed in all cell lines analyzed.

The protein resides in the cytoplasm. The protein localises to the lipid droplet. Its function is as follows. Metalloprotease. The chain is Leishmanolysin-like peptidase (LMLN) from Homo sapiens (Human).